Here is a 129-residue protein sequence, read N- to C-terminus: Venom CUB domain-containing protein 1 (129 aa).

Positions 1–18 are cleaved as a signal peptide; sequence MKLLGVLITIYCIASTLA. The CUB domain maps to 19 to 121; that stretch reads IDVNVPSNGM…KASCKAYSIT (103 aa). Cysteine 66 and cysteine 83 are disulfide-bonded.

The protein belongs to the venom CUB family. In terms of processing, contains 2 disulfide bonds. As to expression, expressed by the venom gland.

It localises to the secreted. The polypeptide is Venom CUB domain-containing protein 1 (Platymeris rhadamanthus (Red spot assassin bug)).